Here is an 862-residue protein sequence, read N- to C-terminus: Transcription initiation factor TFIID subunit 4B (862 aa).

Positions Asn100 to Ala241 are sufficient for interaction with ZNF628. A compositionally biased stretch (polar residues) spans Val219–Pro237. The tract at residues Val219–Leu239 is disordered. The 98-residue stretch at Leu256–Val353 folds into the TAFH domain. The interval Pro511–Gln533 is required for interaction with P65/RELA. The Nuclear export signal motif lies at Ser516–Lys556. Ser595 is modified (phosphoserine). The region spanning Pro653–Ile702 is the Histone-fold domain. Residues Thr722–Asn787 adopt a coiled-coil conformation. Residues Pro830–Lys862 are required for interaction with TAF12.

Belongs to the TAF4 family. In terms of assembly, TFIID is composed of TATA binding protein (TBP) and a number of TBP-associated factors (TAFs). Heterodimerizes with TAF12/TFII20 via the C-terminal H2A-like histone-fold domain. This heterodimer forms a histone-like octamer with the TAF6/TAFII70-TAF9/TAFII31 heterodimer. Interacts with P65/RELA homodimers and P65/RELA-REL heterodimers. Interaction with POU2AF1, via its C-terminal activation domain, is required for octamer-dependent transcription. Interacts with ZNF628. Under stimulation by forskolin, Isoform 1 is phosphorylated by protein kinase A (PKA). In terms of tissue distribution, preferentially expressed in ovarian granulosa cells (at protein level). Highly expressed in B-cells.

The protein resides in the nucleus. Its subcellular location is the cytoplasm. Its function is as follows. Cell type-specific subunit of the general transcription factor TFIID that may function as a gene-selective coactivator in certain cells. TFIID is a multimeric protein complex that plays a central role in mediating promoter responses to various activators and repressors. TAF4B is a transcriptional coactivator of the p65/RELA NF-kappa-B subunit. Involved in the activation of a subset of antiapoptotic genes including TNFAIP3. May be involved in regulating folliculogenesis. Through interaction with OCBA/POU2AF1, acts as a coactivator of B-cell-specific transcription. Plays a role in spermiogenesis and oogenesis. This Homo sapiens (Human) protein is Transcription initiation factor TFIID subunit 4B (TAF4B).